A 403-amino-acid polypeptide reads, in one-letter code: GPI-N-acetylgalactosamine transferase PGAP4 (403 aa).

Residues 1-22 (MTTSTSPAAMLLRRLRRLSWGS) are Cytoplasmic-facing. The helical transmembrane segment at 23-43 (TAVQLFILTVVTFGLLAPLAC) threads the bilayer. Topologically, residues 44-264 (HRLLHSYFYL…INPEPMRILE (221 aa)) are lumenal. Position 109 (V109) interacts with UDP-N-acetyl-alpha-D-galactosamine. Cystine bridges form between C132–C136 and C144–C194. Residues 211–213 (EDD) carry the DXD motif motif. A helical transmembrane segment spans residues 265–285 (WVGVGMLLGPVLTWIYMRFAC). Over 286-287 (RP) the chain is Cytoplasmic. Residues 288–308 (GFSWPVMLFFCLYSMGLVELV) form a helical membrane-spanning segment. Topologically, residues 309-403 (GRHYFLELRR…LRYNFHPSLL (95 aa)) are lumenal. A disulfide bridge links C332 with C333. T334, P335, and K362 together coordinate UDP-N-acetyl-alpha-D-galactosamine.

This sequence belongs to the PGAP4 family. In terms of processing, glycosylated.

The protein localises to the golgi apparatus membrane. Its function is as follows. Golgi-resident glycosylphosphatidylinositol (GPI)-N-acetylgalactosamine transferase that catalyzes the N-acetyl-beta-D-galactosamine transfer from an UDP-N-acetyl-alpha-D-galactosamine to the 4-OH-position of first mannose of the glycosylphosphatidylinositol (GPI) of a GPI-anchored protein (GPI-AP). This modification occurs after the fatty acid remodeling step of the GPI-anchor maturation. This is GPI-N-acetylgalactosamine transferase PGAP4 from Mus musculus (Mouse).